A 443-amino-acid chain; its full sequence is ATP-dependent protease ATPase subunit HslU (443 aa).

ATP contacts are provided by residues Ile-18, 60–65, Asp-256, Glu-321, and Arg-393; that span reads GVGKTE.

This sequence belongs to the ClpX chaperone family. HslU subfamily. As to quaternary structure, a double ring-shaped homohexamer of HslV is capped on each side by a ring-shaped HslU homohexamer. The assembly of the HslU/HslV complex is dependent on binding of ATP.

It is found in the cytoplasm. Functionally, ATPase subunit of a proteasome-like degradation complex; this subunit has chaperone activity. The binding of ATP and its subsequent hydrolysis by HslU are essential for unfolding of protein substrates subsequently hydrolyzed by HslV. HslU recognizes the N-terminal part of its protein substrates and unfolds these before they are guided to HslV for hydrolysis. The polypeptide is ATP-dependent protease ATPase subunit HslU (Enterobacter sp. (strain 638)).